Reading from the N-terminus, the 160-residue chain is MTKKKAYKPGSATIAQNKRARHEYSIEEEFEAGLVLQGWEVKSLRAGKANLSDSYVTFMNGEAYLFGATITPLNVASSHVVCDPIRTRKLLLNKREMDSLFGRVSRDGYTVVALSMYWKNAWSKVKIGVAKGKKDHDKRDDIKEREWKLDKARIMKNANR.

Belongs to the SmpB family.

The protein localises to the cytoplasm. In terms of biological role, required for rescue of stalled ribosomes mediated by trans-translation. Binds to transfer-messenger RNA (tmRNA), required for stable association of tmRNA with ribosomes. tmRNA and SmpB together mimic tRNA shape, replacing the anticodon stem-loop with SmpB. tmRNA is encoded by the ssrA gene; the 2 termini fold to resemble tRNA(Ala) and it encodes a 'tag peptide', a short internal open reading frame. During trans-translation Ala-aminoacylated tmRNA acts like a tRNA, entering the A-site of stalled ribosomes, displacing the stalled mRNA. The ribosome then switches to translate the ORF on the tmRNA; the nascent peptide is terminated with the 'tag peptide' encoded by the tmRNA and targeted for degradation. The ribosome is freed to recommence translation, which seems to be the essential function of trans-translation. The protein is SsrA-binding protein of Pectobacterium atrosepticum (strain SCRI 1043 / ATCC BAA-672) (Erwinia carotovora subsp. atroseptica).